Here is a 185-residue protein sequence, read N- to C-terminus: Large ribosomal subunit protein uL5 (185 aa).

Belongs to the universal ribosomal protein uL5 family. Part of the 50S ribosomal subunit; contacts the 5S rRNA and probably tRNA. Forms a bridge to the 30S subunit in the 70S ribosome.

In terms of biological role, this is one of the proteins that bind and probably mediate the attachment of the 5S RNA into the large ribosomal subunit, where it forms part of the central protuberance. In the 70S ribosome it contacts protein S13 of the 30S subunit (bridge B1b), connecting the 2 subunits; this bridge is implicated in subunit movement. May contact the P site tRNA; the 5S rRNA and some of its associated proteins might help stabilize positioning of ribosome-bound tRNAs. The protein is Large ribosomal subunit protein uL5 of Haloquadratum walsbyi (strain DSM 16790 / HBSQ001).